Reading from the N-terminus, the 413-residue chain is MQIKSFLLPIVAALLTSVSAADSSNKCSFSKTSITEATAITQLNACSTLDGEITVSGSGIGSIDLSSVKVLKAKLSILNSPSIVSLNFNQLQNITGALVINNATQLNSIDLTQLTNVETLQLVSLPSFAILNLNQGVQKAGTIVLSDTALTNLNGLASFNTIDSININNNKNISKIEFNDLQTVTDSLILSFNNDDAEVKLDSLKWAGNLTIQDVSSIQASNLTSVNGSLLISYNTFDELEFPNLKSVGNSMQIFAHDELTKISFPKLSELDGELEMFNNTQLEEIDFGNLTTIKGAVTISGPFDNLTMENLKLVSGDFQVNSTSDKFDCSAFDKLHEKGKIEGHNYVCTHPANPSSSSKSGSSTQTGKSDSKSSDGSSSSNSSSSSKKGASNVLVVPGMVLTTALGVLLALI.

A signal peptide spans 1–20 (MQIKSFLLPIVAALLTSVSA). N-linked (GlcNAc...) asparagine glycans are attached at residues asparagine 93, asparagine 102, asparagine 172, asparagine 209, asparagine 222, asparagine 227, asparagine 279, asparagine 290, asparagine 306, asparagine 322, and asparagine 382. Residues 347 to 390 (YVCTHPANPSSSSKSGSSTQTGKSDSKSSDGSSSSNSSSSSKKG) are disordered. Over residues 356 to 390 (SSSSKSGSSTQTGKSDSKSSDGSSSSNSSSSSKKG) the composition is skewed to low complexity. Glycine 390 is lipidated: GPI-anchor amidated glycine. A propeptide spans 391–413 (ASNVLVVPGMVLTTALGVLLALI) (removed in mature form).

Belongs to the SPS2 family.

The protein resides in the cell membrane. It localises to the secreted. Its subcellular location is the cell wall. Cell surface protein required for proper cell wall integrity and for the correct assembly of the mannoprotein outer layer of the cell wall. This Candida albicans (strain SC5314 / ATCC MYA-2876) (Yeast) protein is Cell surface GPI-anchored protein ECM33 (ECM331).